A 240-amino-acid polypeptide reads, in one-letter code: Urease accessory protein UreF (240 aa).

Belongs to the UreF family. As to quaternary structure, ureD, UreF and UreG form a complex that acts as a GTP-hydrolysis-dependent molecular chaperone, activating the urease apoprotein by helping to assemble the nickel containing metallocenter of UreC. The UreE protein probably delivers the nickel.

The protein resides in the cytoplasm. Its function is as follows. Required for maturation of urease via the functional incorporation of the urease nickel metallocenter. The polypeptide is Urease accessory protein UreF (Bradyrhizobium sp. (strain BTAi1 / ATCC BAA-1182)).